The primary structure comprises 178 residues: Disulfide bond formation protein B (178 aa).

Residues 1 to 14 (MLSFFKTLSTKRSA) are Cytoplasmic-facing. The chain crosses the membrane as a helical span at residues 15–31 (WFLLFSSALLLEAIALY). The Periplasmic segment spans residues 32–49 (FQHGMGLAPCVMCIYERV). A disulfide bridge connects residues cysteine 41 and cysteine 44. The helical transmembrane segment at 50–65 (AILGIAFSGLLGLLYP) threads the bilayer. Residues 66–72 (SSMLLRL) are Cytoplasmic-facing. A helical transmembrane segment spans residues 73-90 (VALLIGLSSAIKGLMISI). Topologically, residues 91–145 (THLDLQLYPAPWKQCSAVAEFPETLPLDQWFPALFLPSGSCSEVTWQFLGFSMVQ) are periplasmic. Residues cysteine 105 and cysteine 131 are joined by a disulfide bond. A helical transmembrane segment spans residues 146 to 164 (WIVVIFALYTLLLALIFIS). At 165 to 177 (QVKRLKPKQRRLF) the chain is on the cytoplasmic side.

This sequence belongs to the DsbB family.

The protein resides in the cell inner membrane. Functionally, required for disulfide bond formation in some periplasmic proteins. Acts by oxidizing the DsbA protein. This chain is Disulfide bond formation protein B, found in Pasteurella multocida (strain Pm70).